A 243-amino-acid polypeptide reads, in one-letter code: DNA repair protein RecO (243 aa).

The protein belongs to the RecO family.

Its function is as follows. Involved in DNA repair and RecF pathway recombination. The chain is DNA repair protein RecO from Hyphomonas neptunium (strain ATCC 15444).